Consider the following 105-residue polypeptide: Small ribosomal subunit protein uS10 (105 aa).

The protein belongs to the universal ribosomal protein uS10 family. In terms of assembly, part of the 30S ribosomal subunit.

Involved in the binding of tRNA to the ribosomes. In Cyanothece sp. (strain PCC 7425 / ATCC 29141), this protein is Small ribosomal subunit protein uS10.